We begin with the raw amino-acid sequence, 374 residues long: DNA replication and repair protein RecF (374 aa).

30-37 is a binding site for ATP; the sequence is GPNAQGKT.

Belongs to the RecF family.

It localises to the cytoplasm. In terms of biological role, the RecF protein is involved in DNA metabolism; it is required for DNA replication and normal SOS inducibility. RecF binds preferentially to single-stranded, linear DNA. It also seems to bind ATP. The protein is DNA replication and repair protein RecF of Lactobacillus gasseri (strain ATCC 33323 / DSM 20243 / BCRC 14619 / CIP 102991 / JCM 1131 / KCTC 3163 / NCIMB 11718 / NCTC 13722 / AM63).